The following is an 806-amino-acid chain: Acetyl-CoA decarbonylase/synthase complex subunit alpha 1 (806 aa).

[4Fe-4S] cluster contacts are provided by Cys73, Cys76, Cys77, Cys79, Cys84, and Cys94. His117 is a CO binding site. Residues His250, Cys278, and Cys323 each coordinate [Ni-4Fe-4S] cluster. 2 consecutive 4Fe-4S ferredoxin-type domains span residues 406–436 (SDEQLKEWVDKCADCGACYLACPIELDIPEA) and 445–475 (FSYLEDLHDACIGCRRCEQVCKKEIPILSVI). [4Fe-4S] cluster is bound by residues Cys417, Cys420, Cys423, Cys427, Cys455, Cys458, Cys461, and Cys465. Positions 523, 552, and 587 each coordinate [Ni-4Fe-4S] cluster.

It belongs to the Ni-containing carbon monoxide dehydrogenase family. As to quaternary structure, heterotetramer of two alpha and two epsilon subunits. The ACDS complex is made up of alpha, epsilon, beta, gamma and delta subunits with a probable stoichiometry of (alpha(2)epsilon(2))(4)-beta(8)-(gamma(1)delta(1))(8). [4Fe-4S] cluster is required as a cofactor. The cofactor is [Ni-4Fe-4S] cluster.

It carries out the reaction CO + 2 oxidized [2Fe-2S]-[ferredoxin] + H2O = 2 reduced [2Fe-2S]-[ferredoxin] + CO2 + 2 H(+). Its pathway is one-carbon metabolism; methanogenesis from acetate. Its function is as follows. Part of the ACDS complex that catalyzes the reversible cleavage of acetyl-CoA, allowing growth on acetate as sole source of carbon and energy. The alpha-epsilon subcomponent functions as a carbon monoxide dehydrogenase. The polypeptide is Acetyl-CoA decarbonylase/synthase complex subunit alpha 1 (Methanosarcina mazei (strain ATCC BAA-159 / DSM 3647 / Goe1 / Go1 / JCM 11833 / OCM 88) (Methanosarcina frisia)).